A 206-amino-acid polypeptide reads, in one-letter code: Thymidylate kinase (206 aa).

10-17 (GIDGAGKS) serves as a coordination point for ATP.

The protein belongs to the thymidylate kinase family.

It catalyses the reaction dTMP + ATP = dTDP + ADP. In terms of biological role, phosphorylation of dTMP to form dTDP in both de novo and salvage pathways of dTTP synthesis. The sequence is that of Thymidylate kinase from Neisseria gonorrhoeae (strain ATCC 700825 / FA 1090).